The chain runs to 102 residues: MSKLVISKERMYDVVRAPVITEKATMGSEFRQVTFKVPLDATKSEIKAAVEGIFGVKVTAVNTLIAKGKVKRFRGRPGVRSDVKKAVVTLAEGHSIDVTTGV.

It belongs to the universal ribosomal protein uL23 family. In terms of assembly, part of the 50S ribosomal subunit. Contacts protein L29, and trigger factor when it is bound to the ribosome.

Functionally, one of the early assembly proteins it binds 23S rRNA. One of the proteins that surrounds the polypeptide exit tunnel on the outside of the ribosome. Forms the main docking site for trigger factor binding to the ribosome. This chain is Large ribosomal subunit protein uL23, found in Paramagnetospirillum magneticum (strain ATCC 700264 / AMB-1) (Magnetospirillum magneticum).